A 237-amino-acid polypeptide reads, in one-letter code: tRNA (guanine-N(7)-)-methyltransferase (237 aa).

The S-adenosyl-L-methionine site is built by Asp-35, Glu-60, Asn-87, and Asp-113. Asp-113 is an active-site residue. Positions 117 and 149 each coordinate substrate.

Belongs to the class I-like SAM-binding methyltransferase superfamily. TrmB family.

The enzyme catalyses guanosine(46) in tRNA + S-adenosyl-L-methionine = N(7)-methylguanosine(46) in tRNA + S-adenosyl-L-homocysteine. The protein operates within tRNA modification; N(7)-methylguanine-tRNA biosynthesis. Its function is as follows. Catalyzes the formation of N(7)-methylguanine at position 46 (m7G46) in tRNA. The polypeptide is tRNA (guanine-N(7)-)-methyltransferase (Synechococcus sp. (strain CC9311)).